Reading from the N-terminus, the 355-residue chain is 3-dehydroquinate synthase (355 aa).

Residues 71-76 (EGEERK), 105-109 (GVVGD), 129-130 (TS), Lys-142, and Lys-151 each bind NAD(+). Positions 184, 246, and 263 each coordinate Zn(2+).

Belongs to the sugar phosphate cyclases superfamily. Dehydroquinate synthase family. Co(2+) is required as a cofactor. The cofactor is Zn(2+). Requires NAD(+) as cofactor.

It localises to the cytoplasm. It carries out the reaction 7-phospho-2-dehydro-3-deoxy-D-arabino-heptonate = 3-dehydroquinate + phosphate. It participates in metabolic intermediate biosynthesis; chorismate biosynthesis; chorismate from D-erythrose 4-phosphate and phosphoenolpyruvate: step 2/7. Its function is as follows. Catalyzes the conversion of 3-deoxy-D-arabino-heptulosonate 7-phosphate (DAHP) to dehydroquinate (DHQ). The polypeptide is 3-dehydroquinate synthase (Streptococcus pneumoniae (strain Hungary19A-6)).